We begin with the raw amino-acid sequence, 330 residues long: Anthranilate phosphoribosyltransferase (330 aa).

5-phospho-alpha-D-ribose 1-diphosphate contacts are provided by residues glycine 79, 82–83 (GD), threonine 87, 89–92 (NIST), 107–115 (KHGNYGVSS), and serine 119. Residue glycine 79 participates in anthranilate binding. Position 91 (serine 91) interacts with Mg(2+). Residue asparagine 110 participates in anthranilate binding. Residue arginine 165 coordinates anthranilate. The Mg(2+) site is built by aspartate 223 and glutamate 224.

It belongs to the anthranilate phosphoribosyltransferase family. In terms of assembly, homodimer. Mg(2+) serves as cofactor.

The enzyme catalyses N-(5-phospho-beta-D-ribosyl)anthranilate + diphosphate = 5-phospho-alpha-D-ribose 1-diphosphate + anthranilate. Its pathway is amino-acid biosynthesis; L-tryptophan biosynthesis; L-tryptophan from chorismate: step 2/5. Catalyzes the transfer of the phosphoribosyl group of 5-phosphorylribose-1-pyrophosphate (PRPP) to anthranilate to yield N-(5'-phosphoribosyl)-anthranilate (PRA). The sequence is that of Anthranilate phosphoribosyltransferase from Flavobacterium psychrophilum (strain ATCC 49511 / DSM 21280 / CIP 103535 / JIP02/86).